The following is a 205-amino-acid chain: Ribonuclease HII (205 aa).

The RNase H type-2 domain occupies 14-205; sequence ERICGIDEAG…SFKVRRLNEA (192 aa). The a divalent metal cation site is built by aspartate 20, glutamate 21, and aspartate 117.

This sequence belongs to the RNase HII family. The cofactor is Mn(2+). It depends on Mg(2+) as a cofactor.

It localises to the cytoplasm. It carries out the reaction Endonucleolytic cleavage to 5'-phosphomonoester.. In terms of biological role, endonuclease that specifically degrades the RNA of RNA-DNA hybrids. The chain is Ribonuclease HII from Chlorobium phaeovibrioides (strain DSM 265 / 1930) (Prosthecochloris vibrioformis (strain DSM 265)).